The sequence spans 216 residues: Fibroblast growth factor 17 (216 aa).

Positions methionine 1–glutamine 22 are cleaved as a signal peptide. The N-linked (GlcNAc...) asparagine glycan is linked to asparagine 137. The tract at residues glutamate 190 to threonine 216 is disordered. Residues arginine 204–threonine 216 are compositionally biased toward basic residues.

This sequence belongs to the heparin-binding growth factors family. Interacts with FGFR3 and FGFR4. In terms of tissue distribution, preferentially expressed in the embryonic brain.

It localises to the secreted. In terms of biological role, plays an important role in the regulation of embryonic development and as signaling molecule in the induction and patterning of the embryonic brain. Required for normal brain development. The sequence is that of Fibroblast growth factor 17 (FGF17) from Homo sapiens (Human).